The primary structure comprises 171 residues: Cytochrome c oxidase subunit 5, mitochondrial (171 aa).

The N-terminal 27 residues, M1–A27, are a transit peptide targeting the mitochondrion. The Mitochondrial matrix segment spans residues A28–K100. The helical transmembrane segment at V101–A123 threads the bilayer. Topologically, residues K124–A171 are mitochondrial intermembrane. Residues Q145–A171 form a disordered region.

This sequence belongs to the cytochrome c oxidase IV family. In terms of assembly, component of the cytochrome c oxidase (complex IV, CIV), a multisubunit enzyme composed of 11 subunits. The complex is composed of a catalytic core of 3 subunits Cox1, Cox2 and Cox3, encoded in the mitochondrial DNA, and 8 supernumerary subunits Cox4, Cox5a/Cox5, Cox6, Cox7, Cox8, Cox7a/Cox9, Cox6b/Cox12 and Cox6a/Cox13, which are encoded in the nuclear genome. The complex exists as a monomer or a dimer and forms respiratory supercomplexes (SCs) in the inner mitochondrial membrane with NADH-ubiquinone oxidoreductase (complex I, CI) and ubiquinol-cytochrome c oxidoreductase (cytochrome b-c1 complex, complex III, CIII), resulting in various different assemblies (supercomplexes I(1)IV(1), I(1)III(3)IV(2), III(2)IV(1) and III(2)IV(2) as well as larger supercomplexes of compositions like I(1)III(2)IV(5-6)).

The protein localises to the mitochondrion inner membrane. Its pathway is energy metabolism; oxidative phosphorylation. Component of the cytochrome c oxidase, the last enzyme in the mitochondrial electron transport chain which drives oxidative phosphorylation. The respiratory chain contains 3 multisubunit complexes succinate dehydrogenase (complex II, CII), ubiquinol-cytochrome c oxidoreductase (cytochrome b-c1 complex, complex III, CIII) and cytochrome c oxidase (complex IV, CIV), that cooperate to transfer electrons derived from NADH and succinate to molecular oxygen, creating an electrochemical gradient over the inner membrane that drives transmembrane transport and the ATP synthase. Cytochrome c oxidase is the component of the respiratory chain that catalyzes the reduction of oxygen to water. Electrons originating from reduced cytochrome c in the intermembrane space (IMS) are transferred via the dinuclear copper A center (CU(A)) of Cox2 and heme A of Cox1 to the active site in Cox1, a binuclear center (BNC) formed by heme A3 and copper B (CU(B)). The BNC reduces molecular oxygen to 2 water molecules using 4 electrons from cytochrome c in the IMS and 4 protons from the mitochondrial matrix. The sequence is that of Cytochrome c oxidase subunit 5, mitochondrial (cya-4) from Neurospora crassa (strain ATCC 24698 / 74-OR23-1A / CBS 708.71 / DSM 1257 / FGSC 987).